A 366-amino-acid chain; its full sequence is tRNA pseudouridine synthase B (366 aa).

The segment at 1–55 is disordered; sequence MTVTTPDALLAPHDVQHAGADESAAQIRKPRDNNDPRNANRGGGNGKPRRDKRDV. The active-site Nucleophile is the Asp-92.

This sequence belongs to the pseudouridine synthase TruB family. Type 1 subfamily.

The catalysed reaction is uridine(55) in tRNA = pseudouridine(55) in tRNA. Functionally, responsible for synthesis of pseudouridine from uracil-55 in the psi GC loop of transfer RNAs. The protein is tRNA pseudouridine synthase B of Rhodopseudomonas palustris (strain ATCC BAA-98 / CGA009).